The sequence spans 828 residues: Potassium channel SKOR (828 aa).

Topologically, residues M1–T86 are cytoplasmic. Residues M87–F107 form a helical membrane-spanning segment. Residues R108–L114 are Extracellular-facing. Residues F115–V135 form a helical membrane-spanning segment. Residues A136–K158 are Cytoplasmic-facing. The chain crosses the membrane as a helical span at residues S159 to G179. Over E180–R185 the chain is Extracellular. A helical; Voltage-sensor transmembrane segment spans residues Y186 to E206. The Cytoplasmic segment spans residues K207–K220. A helical membrane pass occupies residues L221–T241. Residues T242 to T276 lie on the Extracellular side of the membrane. The segment at residues T277–A296 is an intramembrane region (pore-forming). Topologically, residues V297–R300 are extracellular. The helical transmembrane segment at E301–G321 threads the bilayer. Over N322 to T828 the chain is Cytoplasmic. An a nucleoside 3',5'-cyclic phosphate-binding site is contributed by L403–G523. ANK repeat units follow at residues E545–K576, D580–I609, L613–I642, N644–S673, D677–A706, and W710–S740. The KHA domain occupies K756–T828.

Belongs to the potassium channel family. Plant (TC 1.A.1.4) subfamily. In terms of assembly, the potassium channel is probably composed of a homo- or heterotetrameric complex of pore-forming subunits. As to expression, expressed in root pericycle and xylem parenchyma, and in flower at a lower level.

The protein localises to the membrane. Functionally, highly selective outward-rectifying potassium channel. Involved in potassium release into the xylem sap toward the shoots. Assuming opened or closed conformations in response to the voltage difference across the membrane, the channel is activated by depolarization. The voltage-dependence of the channel is abolished by internal or external acidification. May interact with the cytoskeleton or with regulatory proteins. This is Potassium channel SKOR (SKOR) from Arabidopsis thaliana (Mouse-ear cress).